The chain runs to 319 residues: NH(3)-dependent NAD(+) synthetase (319 aa).

33 to 40 (GLSGGIDS) contributes to the ATP binding site. D39 lines the Mg(2+) pocket. Position 169 (R169) interacts with deamido-NAD(+). Residue T189 participates in ATP binding. E194 contributes to the Mg(2+) binding site. K202 and D209 together coordinate deamido-NAD(+). ATP contacts are provided by K218 and T240.

This sequence belongs to the NAD synthetase family. As to quaternary structure, homodimer.

It catalyses the reaction deamido-NAD(+) + NH4(+) + ATP = AMP + diphosphate + NAD(+) + H(+). It functions in the pathway cofactor biosynthesis; NAD(+) biosynthesis; NAD(+) from deamido-NAD(+) (ammonia route): step 1/1. In terms of biological role, catalyzes the ATP-dependent amidation of deamido-NAD to form NAD. Uses ammonia as a nitrogen source. The polypeptide is NH(3)-dependent NAD(+) synthetase (Mesorhizobium japonicum (strain LMG 29417 / CECT 9101 / MAFF 303099) (Mesorhizobium loti (strain MAFF 303099))).